An 844-amino-acid chain; its full sequence is E3 ubiquitin-protein ligase BRE1-like 2 (844 aa).

Coiled-coil stretches lie at residues 1-38 (MDAA…RDEQ) and 160-240 (EDVI…QLQT). The tract at residues 244-269 (SLMNTSAPNGVNGSVSTDKSSDKGMG) is disordered. A compositionally biased stretch (polar residues) spans 245–261 (LMNTSAPNGVNGSVSTD). 2 coiled-coil regions span residues 290–604 (ELHE…SEIE) and 640–670 (KMKQ…ESSK). An RING-type zinc finger spans residues 792–831 (CGVCFDRPKEVVITKCFHLFCSPCIQRNLEIRHRKCPGCG).

It belongs to the BRE1 family.

The protein resides in the nucleus. The catalysed reaction is S-ubiquitinyl-[E2 ubiquitin-conjugating enzyme]-L-cysteine + [acceptor protein]-L-lysine = [E2 ubiquitin-conjugating enzyme]-L-cysteine + N(6)-ubiquitinyl-[acceptor protein]-L-lysine.. Its pathway is protein modification; protein ubiquitination. In terms of biological role, E3 ubiquitin-protein ligase that monoubiquitinates H2B to form H2BK143ub1. H2BK143ub1 gives a specific tag for epigenetic transcriptional activation and is also prerequisite for H3K4me and maybe H3K79me. It thereby plays a central role in histone code and gene regulation. Forms a ubiquitin ligase complex in cooperation with the E2 enzyme UBC2/RAD6. This chain is E3 ubiquitin-protein ligase BRE1-like 2 (BRE1B), found in Oryza sativa subsp. indica (Rice).